Reading from the N-terminus, the 34-residue chain is Potassium channel toxin alpha-KTx 6.17 (34 aa).

Intrachain disulfides connect C3–C24, C9–C29, C13–C31, and C19–C34.

This sequence belongs to the short scorpion toxin superfamily. Potassium channel inhibitor family. Alpha-KTx 06 subfamily. Expressed by the venom gland.

The protein resides in the secreted. Its function is as follows. This toxin reversibly blocks Shaker B potassium-channels (expressed in insect Sf9 cells) with a Kd of 96.6 nM, and presents an even better affinity toward hKv1.3 (KCNA3), blocking it with a Kd of 17.7 nM. In Opisthacanthus cayaporum (South American scorpion), this protein is Potassium channel toxin alpha-KTx 6.17.